Reading from the N-terminus, the 283-residue chain is NAD kinase (283 aa).

Asp68 serves as the catalytic Proton acceptor. NAD(+) contacts are provided by residues 68-69 (DG), 142-143 (ND), Arg153, Asp172, 183-188 (TAYSLS), and Gln242.

Belongs to the NAD kinase family. A divalent metal cation serves as cofactor.

It localises to the cytoplasm. It catalyses the reaction NAD(+) + ATP = ADP + NADP(+) + H(+). Functionally, involved in the regulation of the intracellular balance of NAD and NADP, and is a key enzyme in the biosynthesis of NADP. Catalyzes specifically the phosphorylation on 2'-hydroxyl of the adenosine moiety of NAD to yield NADP. The polypeptide is NAD kinase (Thermoanaerobacter pseudethanolicus (strain ATCC 33223 / 39E) (Clostridium thermohydrosulfuricum)).